The primary structure comprises 169 residues: Lipoprotein signal peptidase (169 aa).

The next 4 membrane-spanning stretches (helical) occupy residues P4 to I24, W29 to T49, W70 to S90, and Y101 to V121. Active-site residues include D123 and D141. A helical transmembrane segment spans residues F137–L157.

Belongs to the peptidase A8 family.

It is found in the cell inner membrane. The enzyme catalyses Release of signal peptides from bacterial membrane prolipoproteins. Hydrolyzes -Xaa-Yaa-Zaa-|-(S,diacylglyceryl)Cys-, in which Xaa is hydrophobic (preferably Leu), and Yaa (Ala or Ser) and Zaa (Gly or Ala) have small, neutral side chains.. It participates in protein modification; lipoprotein biosynthesis (signal peptide cleavage). In terms of biological role, this protein specifically catalyzes the removal of signal peptides from prolipoproteins. The chain is Lipoprotein signal peptidase from Yersinia pseudotuberculosis serotype O:1b (strain IP 31758).